The sequence spans 381 residues: tRNA pseudouridine synthase D (381 aa).

Residue aspartate 81 is the Nucleophile of the active site. The TRUD domain occupies 160 to 335 (GMPNYFGSQR…TLGSRRFFWV (176 aa)).

Belongs to the pseudouridine synthase TruD family.

The enzyme catalyses uridine(13) in tRNA = pseudouridine(13) in tRNA. Responsible for synthesis of pseudouridine from uracil-13 in transfer RNAs. This chain is tRNA pseudouridine synthase D, found in Helicobacter acinonychis (strain Sheeba).